Consider the following 488-residue polypeptide: 3-octaprenyl-4-hydroxybenzoate carboxy-lyase (488 aa).

N172 provides a ligand contact to Mn(2+). Residues 175-177 (IYR), 189-191 (RWL), and 194-195 (RG) contribute to the prenylated FMN site. E238 contributes to the Mn(2+) binding site. Catalysis depends on D287, which acts as the Proton donor.

The protein belongs to the UbiD family. Homohexamer. The cofactor is prenylated FMN. Mn(2+) serves as cofactor.

The protein localises to the cell membrane. It carries out the reaction a 4-hydroxy-3-(all-trans-polyprenyl)benzoate + H(+) = a 2-(all-trans-polyprenyl)phenol + CO2. The protein operates within cofactor biosynthesis; ubiquinone biosynthesis. Catalyzes the decarboxylation of 3-octaprenyl-4-hydroxy benzoate to 2-octaprenylphenol, an intermediate step in ubiquinone biosynthesis. The polypeptide is 3-octaprenyl-4-hydroxybenzoate carboxy-lyase (Halorhodospira halophila (strain DSM 244 / SL1) (Ectothiorhodospira halophila (strain DSM 244 / SL1))).